A 2332-amino-acid chain; its full sequence is Phosphatidylinositol phosphatase PTPRQ (2332 aa).

The signal sequence occupies residues 1-35 (MKKVPIKPEQPEKLRAFNISTHSFSLHWSLPSGHV). 18 Fibronectin type-III domains span residues 36 to 99 (ERYQ…TKPG), 100 to 195 (PPVF…TAES), 199 to 294 (KVVN…SSST), 350 to 438 (PPQN…PPDV), 441 to 539 (AVFD…SHPD), 514 to 606 (GLYE…SVRT), 610 to 705 (VPSS…TSED), 710 to 799 (SPQD…TSET), 804 to 894 (APEN…TEED), 899 to 988 (PPQD…TPEG), 993 to 1093 (PPKD…TDQD), 1098 to 1190 (FVGN…TEED), 1192 to 1282 (PETS…TDES), 1287 to 1380 (PPQN…TQES), 1384 to 1470 (VVQN…LPET), 1474 to 1578 (VPTN…TLPG), 1583 to 1681 (PPEN…TLES), and 1686 to 1787 (PPNN…IKAP). Residues 36–1947 (ERYQVDLVPD…GEGLSERTVE (1912 aa)) are Extracellular-facing. N94 is a glycosylation site (N-linked (GlcNAc...) asparagine). N202 and N394 each carry an N-linked (GlcNAc...) asparagine glycan. N-linked (GlcNAc...) asparagine glycosylation is found at N944, N1038, N1080, and N1101. N1290 and N1295 each carry an N-linked (GlcNAc...) asparagine glycan. A glycan (N-linked (GlcNAc...) asparagine) is linked at N1844. The chain crosses the membrane as a helical span at residues 1948–1968 (IILSVTLCILSIILLGTAIFA). Residues 1969–2332 (FARIRQKQKE…VELEWEETTM (364 aa)) lie on the Cytoplasmic side of the membrane. Residues 2036–2292 (FQEEFSELPK…IFLHQCILDL (257 aa)) enclose the Tyrosine-protein phosphatase domain. C2233 functions as the Phosphocysteine intermediate in the catalytic mechanism.

The protein belongs to the protein-tyrosine phosphatase family. Receptor class 2A subfamily. As to quaternary structure, interacts with TPRN. TPRN, CLIC5 and PTPQR form concentric rings at the base of stereocilia and may form a complex. In terms of tissue distribution, in developing kidney, it localizes to the basal membrane of podocytes, beginning when podocyte progenitors can first be identified in the embryonic kidney (at protein level). Expressed in lung and kidney.

It localises to the cell projection. Its subcellular location is the stereocilium. The protein localises to the apical cell membrane. The protein resides in the basal cell membrane. The catalysed reaction is a 1,2-diacyl-sn-glycero-3-phospho-(1D-myo-inositol-3,4,5-trisphosphate) + H2O = a 1,2-diacyl-sn-glycero-3-phospho-(1D-myo-inositol-4,5-bisphosphate) + phosphate. It catalyses the reaction a 1,2-diacyl-sn-glycero-3-phospho-(1D-myo-inositol-3,4,5-trisphosphate) + H2O = a 1,2-diacyl-sn-glycero-3-phospho-(1D-myo-inositol-3,4-bisphosphate) + phosphate. The enzyme catalyses a 1,2-diacyl-sn-glycero-3-phospho-(1D-myo-inositol-3,5-bisphosphate) + H2O = a 1,2-diacyl-sn-glycero-3-phospho-(1D-myo-inositol-5-phosphate) + phosphate. It carries out the reaction a 1,2-diacyl-sn-glycero-3-phospho-(1D-myo-inositol-3,5-bisphosphate) + H2O = a 1,2-diacyl-sn-glycero-3-phospho-(1D-myo-inositol-3-phosphate) + phosphate. Dephosphorylates phosphatidylinositol phosphates, such as phosphatidylinositol 3,4,5-trisphosphate (PIP3) and phosphatidylinositol 3,5-diphosphates, with preference for PIP3. Phosphate can be hydrolyzed from the D3 and D5 positions in the inositol ring. Has low tyrosine-protein phosphatase activity in vitro; however, the relevance of such activity in vivo is unclear. Plays an important role in adipogenesis of mesenchymal stem cells (MSCs). Regulates the phosphorylation state of AKT1 by regulating the levels of PIP3 in MSCs and preadipocyte cells. Required for hair bundle maturation, a process that enables hair cells to detect and transmit sound and balance signals effectively, therefore affecting auditory function. May act by regulating the level of phosphatidylinositol 4,5-bisphosphate (PIP2) level in the basal region of hair bundles. This is Phosphatidylinositol phosphatase PTPRQ (PTPRQ) from Homo sapiens (Human).